Reading from the N-terminus, the 562-residue chain is Alpha-1D adrenergic receptor (562 aa).

At 1–90 the chain is on the extracellular side; sequence MTFRDILSVT…VGGLVVSAQG (90 aa). 2 disordered regions span residues 13-44 and 50-69; these read GPRASSSTGGSGAGGGAGTVGPEGPAVGGVPG and AVVGTGSGEDNQSSTAEAGA. Over residues 21-44 the composition is skewed to gly residues; the sequence is GGSGAGGGAGTVGPEGPAVGGVPG. N-linked (GlcNAc...) asparagine glycans are attached at residues Asn-60 and Asn-76. Residues 91-115 form a helical membrane-spanning segment; it reads VGVGVFLAAFILTAVAGNLLVILSV. Residues 116-127 lie on the Cytoplasmic side of the membrane; that stretch reads ACNRHLQTVTNY. Residues 128-153 form a helical membrane-spanning segment; sequence FIVNLAVADLLLSAAVLPFSATMEVL. The Extracellular segment spans residues 154–163; sequence GFWPFGRTFC. The helical transmembrane segment at 164-186 threads the bilayer; that stretch reads DVWAAVDVLCCTASILSLCTISV. The Cytoplasmic segment spans residues 187–207; sequence DRYVGVRHSLKYPAIMTERKA. A helical membrane pass occupies residues 208 to 232; that stretch reads AAILALLWAVALVVSVGPLLGWKEP. Over 233-245 the chain is Extracellular; that stretch reads VPPDERFCGITEE. The helical transmembrane segment at 246–269 threads the bilayer; the sequence is VGYAIFSSVCSFYLPMAVIVVMYC. Topologically, residues 270–342 are cytoplasmic; sequence RVYVVARSTT…KFSREKKAAK (73 aa). A helical transmembrane segment spans residues 343–367; the sequence is TLAIVVGVFVLCWFPFFFVLPLGSL. Residues 368 to 374 are Extracellular-facing; that stretch reads FPQLKPS. The helical transmembrane segment at 375-399 threads the bilayer; the sequence is EGVFKVIFWLGYFNSCVNPLIYPCS. Topologically, residues 400–562 are cytoplasmic; it reads SREFKRAFLR…DLSNLRETDI (163 aa). A lipid anchor (S-palmitoyl cysteine) is attached at Cys-413. Positions 444–472 are disordered; that stretch reads QPAHRTPRGSPSPHCTPRPGLRRHAGGAG.

Belongs to the G-protein coupled receptor 1 family. Adrenergic receptor subfamily. ADRA1D sub-subfamily. Interacts with FLNA (via filamin repeat 21); increases PKA-mediated phosphorylation of FLNA. Palmitoylated. Palmitoylation by ZDHHC21 may increase the expression of the receptor and regulate downstream signaling.

It is found in the cell membrane. In terms of biological role, this alpha-adrenergic receptor mediates its effect through the influx of extracellular calcium. The protein is Alpha-1D adrenergic receptor (Adra1d) of Mus musculus (Mouse).